Consider the following 1530-residue polypeptide: Brefeldin A resistance protein (1530 aa).

Positions 1–26 are enriched in polar residues; sequence MNQNSDTTHGQALGSTLNHTTEVTRI. A disordered region spans residues 1–100; it reads MNQNSDTTHG…SDDSSVDRLA (100 aa). A glycan (N-linked (GlcNAc...) asparagine) is linked at asparagine 28. The segment covering 36-48 has biased composition (low complexity); the sequence is SSSNVDESLDSSN. The span at 54 to 64 shows a compositional bias: basic and acidic residues; the sequence is KASHTNEEYRS. Asparagine 67 is a glycosylation site (N-linked (GlcNAc...) asparagine). Residues 72–93 are compositionally biased toward low complexity; that stretch reads PSSSNEPSPESSSNSDSSSSDD. The ABC transporter 1 domain occupies 153–410; the sequence is KTFPDIFLQP…FLDMGFDCHP (258 aa). Asparagine 273, asparagine 334, and asparagine 450 each carry an N-linked (GlcNAc...) asparagine glycan. 2 positions are modified to phosphoserine: serine 486 and serine 489. Phosphothreonine is present on threonine 491. 6 consecutive transmembrane segments (helical) span residues 539 to 559, 575 to 595, 620 to 640, 649 to 669, 684 to 704, and 791 to 811; these read AYIG…GSIF, VLFF…ANMF, LIVD…VLYF, GGFW…SAFF, ALGG…IPNI, and LAII…ASET. Residues 843–864 are disordered; the sequence is PLDLETGQDTQGGDVVKESPDN. An ABC transporter 2 domain is found at 882–1125; sequence FSWRNLNYDI…LLNYFESHGA (244 aa). 918–925 is an ATP binding site; sequence GESGAGKT. Residues asparagine 1159 and asparagine 1175 are each glycosylated (N-linked (GlcNAc...) asparagine). Residue threonine 1186 is modified to Phosphothreonine. The next 6 membrane-spanning stretches (helical) occupy residues 1220–1240, 1255–1275, 1300–1320, 1338–1358, 1367–1387, and 1392–1412; these read ILMS…FTFY, AVFM…PKFI, AIIV…LCWF, YAWL…QAVA, ASVV…VLQP, and VGFW…EGLL. Asparagine 1449 and asparagine 1460 each carry an N-linked (GlcNAc...) asparagine glycan. A helical transmembrane segment spans residues 1492–1512; that stretch reads GIFVGYVFFNIFAVLLLFYVF.

Belongs to the ABC transporter superfamily. ABCG family. PDR (TC 3.A.1.205) subfamily.

The protein localises to the membrane. Confers hyper-resistance to brefeldin A (BFA), an inhibitor of intracellular protein transport. Could serve as an efflux pump of various antibiotics. The protein is Brefeldin A resistance protein (bfr1) of Schizosaccharomyces pombe (strain 972 / ATCC 24843) (Fission yeast).